The following is a 78-amino-acid chain: UPF0270 protein ECA4061 (78 aa).

This sequence belongs to the UPF0270 family.

This chain is UPF0270 protein ECA4061, found in Pectobacterium atrosepticum (strain SCRI 1043 / ATCC BAA-672) (Erwinia carotovora subsp. atroseptica).